Reading from the N-terminus, the 394-residue chain is Na(+)/H(+) antiporter NhaA (394 aa).

The next 11 membrane-spanning stretches (helical) occupy residues A14–F34, L59–V79, I95–I115, G125–S145, F155–F175, N177–M197, G204–V224, W258–G278, I292–V312, V328–L348, and L362–L382.

The protein belongs to the NhaA Na(+)/H(+) (TC 2.A.33) antiporter family.

The protein localises to the cell inner membrane. It carries out the reaction Na(+)(in) + 2 H(+)(out) = Na(+)(out) + 2 H(+)(in). Its function is as follows. Na(+)/H(+) antiporter that extrudes sodium in exchange for external protons. In Haemophilus ducreyi (strain 35000HP / ATCC 700724), this protein is Na(+)/H(+) antiporter NhaA.